Here is a 145-residue protein sequence, read N- to C-terminus: MLVPKRVKHRREFRGKMRGEAKGGKTIAFGEYGLEAVESHWITNRQIEAARIAMTRFMKRGGKVWIRIFPQKSYTAKGVGVRMGSGKGAPAGWVAVVKRGKIMFEIGGVSEDVAREALRLASNKLPIKTKFVKKSSEVGGESNEG.

This sequence belongs to the universal ribosomal protein uL16 family. Part of the 50S ribosomal subunit.

Binds 23S rRNA and is also seen to make contacts with the A and possibly P site tRNAs. The polypeptide is Large ribosomal subunit protein uL16 (Lactobacillus johnsonii (strain CNCM I-12250 / La1 / NCC 533)).